Consider the following 335-residue polypeptide: Nucleoid-associated protein PC1_1634 (335 aa).

This sequence belongs to the YejK family.

It is found in the cytoplasm. Its subcellular location is the nucleoid. The protein is Nucleoid-associated protein PC1_1634 of Pectobacterium carotovorum subsp. carotovorum (strain PC1).